A 197-amino-acid chain; its full sequence is Probable GTP-binding protein EngB (197 aa).

The EngB-type G domain occupies 22 to 195; it reads NLPEIAFVGR…VDYLFDDLVE (174 aa). GTP-binding positions include 30–37, 57–61, 75–78, 142–145, and 174–176; these read GRSNVGKS, GKTRL, DLPG, TKSD, and FSS. The Mg(2+) site is built by serine 37 and threonine 59.

Belongs to the TRAFAC class TrmE-Era-EngA-EngB-Septin-like GTPase superfamily. EngB GTPase family. It depends on Mg(2+) as a cofactor.

Its function is as follows. Necessary for normal cell division and for the maintenance of normal septation. The sequence is that of Probable GTP-binding protein EngB from Clostridium perfringens (strain 13 / Type A).